A 445-amino-acid polypeptide reads, in one-letter code: Plasmid recombination enzyme (445 aa).

2 residues coordinate DNA: Y45 and Y113.

The protein belongs to the plasmid mobilization pre family.

The protein is Plasmid recombination enzyme of Bacillus thuringiensis.